We begin with the raw amino-acid sequence, 455 residues long: Tryptophan dimethylallyltransferase (455 aa).

L-tryptophan-binding positions include 79–80 (VL) and glutamate 88. 3 residues coordinate substrate: arginine 99, lysine 186, and tyrosine 188. 2 residues coordinate L-tryptophan: tyrosine 190 and arginine 256. 7 residues coordinate substrate: arginine 269, lysine 271, tyrosine 273, glutamine 355, tyrosine 357, tyrosine 421, and tyrosine 425.

It belongs to the tryptophan dimethylallyltransferase family. As to quaternary structure, homodimer.

The enzyme catalyses L-tryptophan + dimethylallyl diphosphate = 4-(3-methylbut-2-enyl)-L-tryptophan + diphosphate. Its pathway is alkaloid biosynthesis; ergot alkaloid biosynthesis. Tryptophan dimethylallyltransferase; part of the gene cluster that mediates the biosynthesis of fungal ergot alkaloid. DmaW catalyzes the first step of ergot alkaloid biosynthesis by condensing dimethylallyl diphosphate (DMAP) and tryptophan to form 4-dimethylallyl-L-tryptophan. The second step is catalyzed by the methyltransferase easF that methylates 4-dimethylallyl-L-tryptophan in the presence of S-adenosyl-L-methionine, resulting in the formation of 4-dimethylallyl-L-abrine. The catalase easC and the FAD-dependent oxidoreductase easE then transform 4-dimethylallyl-L-abrine to chanoclavine-I which is further oxidized by easD in the presence of NAD(+), resulting in the formation of chanoclavine-I aldehyde. Agroclavine dehydrogenase easG then mediates the conversion of chanoclavine-I aldehyde to agroclavine via a non-enzymatic adduct reaction: the substrate is an iminium intermediate that is formed spontaneously from chanoclavine-I aldehyde in the presence of glutathione. Further conversion of agroclavine to paspalic acid is a two-step process involving oxidation of agroclavine to elymoclavine and of elymoclavine to paspalic acid, the second step being performed by the elymoclavine oxidase cloA. However, cloA does not encode a functional enzyme indicating that C.fusiformis terminates its ergot alkaloid pathway at elymoclavine. The polypeptide is Tryptophan dimethylallyltransferase (Claviceps fusiformis (Ergot fungus)).